A 277-amino-acid chain; its full sequence is Large ribosomal subunit protein uL2 (277 aa).

Disordered stretches follow at residues 38-58 (HRKG…GGGH) and 219-277 (TVRG…RKNK).

This sequence belongs to the universal ribosomal protein uL2 family. As to quaternary structure, part of the 50S ribosomal subunit. Forms a bridge to the 30S subunit in the 70S ribosome.

One of the primary rRNA binding proteins. Required for association of the 30S and 50S subunits to form the 70S ribosome, for tRNA binding and peptide bond formation. It has been suggested to have peptidyltransferase activity; this is somewhat controversial. Makes several contacts with the 16S rRNA in the 70S ribosome. The sequence is that of Large ribosomal subunit protein uL2 from Bacillus pumilus (strain SAFR-032).